A 1176-amino-acid polypeptide reads, in one-letter code: Translation initiation factor IF-2 (1176 aa).

4 stretches are compositionally biased toward low complexity: residues Ile32–Ser44, Ala57–Ser79, Ala94–Ser166, and Lys193–Thr235. Disordered stretches follow at residues Ile32–Lys502 and Arg535–Arg567. A compositionally biased stretch (pro residues) spans Ala251–Ala270. Composition is skewed to low complexity over residues Gly388–Arg409 and Asn439–Gly469. A compositionally biased stretch (basic and acidic residues) spans Gly478–Arg492. Positions Val553–Arg567 are enriched in basic residues. Positions Arg668–Leu840 constitute a tr-type G domain. The interval Gly677–Thr684 is G1. Residue Gly677 to Thr684 participates in GTP binding. The interval Gly702–His706 is G2. The G3 stretch occupies residues Asp727 to Gly730. Residues Asp727 to His731 and Asn781 to Asp784 contribute to the GTP site. Positions Asn781 to Asp784 are G4. The interval Ser817–Ile819 is G5.

It belongs to the TRAFAC class translation factor GTPase superfamily. Classic translation factor GTPase family. IF-2 subfamily.

The protein localises to the cytoplasm. Its function is as follows. One of the essential components for the initiation of protein synthesis. Protects formylmethionyl-tRNA from spontaneous hydrolysis and promotes its binding to the 30S ribosomal subunits. Also involved in the hydrolysis of GTP during the formation of the 70S ribosomal complex. This Synechococcus sp. (strain CC9902) protein is Translation initiation factor IF-2.